Consider the following 301-residue polypeptide: Mitochondrial ornithine transporter 1 (301 aa).

6 consecutive transmembrane segments (helical) span residues Pro-5–Leu-25, Ser-68–Cys-88, Ala-110–Val-130, Gly-168–Phe-188, Leu-207–Val-227, and Ile-237–Val-257. 3 Solcar repeats span residues Ile-7–Val-91, Leu-104–Phe-197, and Leu-207–Leu-293.

This sequence belongs to the mitochondrial carrier (TC 2.A.29) family. Expressed in the liver (at protein level).

Its subcellular location is the mitochondrion inner membrane. It localises to the mitochondrion membrane. It carries out the reaction L-citrulline(in) + L-ornithine(out) + H(+)(in) = L-citrulline(out) + L-ornithine(in) + H(+)(out). The enzyme catalyses L-ornithine(in) + L-arginine(out) = L-ornithine(out) + L-arginine(in). It catalyses the reaction L-ornithine(out) + L-lysine(in) = L-ornithine(in) + L-lysine(out). The catalysed reaction is L-ornithine(out) + H(+)(in) = L-ornithine(in) + H(+)(out). It carries out the reaction L-lysine(out) + H(+)(in) = L-lysine(in) + H(+)(out). Its activity is regulated as follows. Inhibited by pyridoxal 5'-phosphate as well as by mercurials (mersalyl, p-chloromercuribenzene sulfonate, and mercuric chloride), N-ethylmaleimide and spermine. Functionally, mitochondrial ornithine-citrulline antiporter. Catalyzes the exchange between cytosolic ornithine and mitochondrial citrulline plus an H(+), the proton compensates the positive charge of ornithine thus leading to an electroneutral transport. Plays a crucial role in the urea cycle, by connecting the cytosolic and the intramitochondrial reactions of the urea cycle. Lysine and arginine are also transported by the antiport mechanism. In addition, catalyzes an electroneutral exchange of ornithine or lysine for H(+), a reaction driven by the pH gradient across the inner membrane. This chain is Mitochondrial ornithine transporter 1 (Slc25a15), found in Rattus norvegicus (Rat).